Consider the following 322-residue polypeptide: MQIGPYQLKNQLIVAPMAGVTDQAFRNLCLRYGAALAVSEMLSSNPEVWDTDKSRQRMTHSGEEGIRSVQIAGADPELMAQAAQFNVEQGAHIIDINMGCPAKKVNKKLAGSALMQNPPLVKDILQAVVAAVDVPVTLKIRTGWEPEHRNGVQIAQIAEDCGIASLAVHGRTRQCMYKGNAEYDTIKAIKQNVSIPVVANGDIDSPEKARFVLDYTGVDALMIGRGAQGRPWIFREIQHYLETGNKLAPIEVAEQRQVMLEHLTKLYDLYGEYKGIRFARKHIGWYLDQEDQRQFRADFNQLETAAEQYSLVEYYFDELVQN.

Residues 16–18 (PMA) and glutamine 70 each bind FMN. The active-site Proton donor is the cysteine 100. FMN contacts are provided by residues lysine 139, 200–202 (NGD), and 224–225 (GR).

This sequence belongs to the Dus family. DusB subfamily. Requires FMN as cofactor.

It carries out the reaction a 5,6-dihydrouridine in tRNA + NAD(+) = a uridine in tRNA + NADH + H(+). It catalyses the reaction a 5,6-dihydrouridine in tRNA + NADP(+) = a uridine in tRNA + NADPH + H(+). Functionally, catalyzes the synthesis of 5,6-dihydrouridine (D), a modified base found in the D-loop of most tRNAs, via the reduction of the C5-C6 double bond in target uridines. This chain is tRNA-dihydrouridine synthase B, found in Shewanella oneidensis (strain ATCC 700550 / JCM 31522 / CIP 106686 / LMG 19005 / NCIMB 14063 / MR-1).